The sequence spans 305 residues: Protein hrde-2 (305 aa).

Disordered stretches follow at residues Ala211 to Ala233 and Glu267 to Gln305. A compositionally biased stretch (polar residues) spans Pro215–Ser227. Positions Met268 to Tyr287 are enriched in acidic residues. The segment covering Asn289–Gln305 has biased composition (basic and acidic residues).

In terms of tissue distribution, expressed throughout the male and female germline.

Its subcellular location is the nucleus. Plays a role in germline RNA interference (RNAi), and in particular is required for piwi-interacting RNA (piRNA) gene silencing. Facilitates the binding of the argonaut protein hrde-1 to small interfering RNAs (siRNAs) targets that are required for transgenerational epigenetic inheritance and germline immortality. This chain is Protein hrde-2, found in Caenorhabditis elegans.